Here is a 391-residue protein sequence, read N- to C-terminus: NADH-quinone oxidoreductase subunit D (391 aa).

Belongs to the complex I 49 kDa subunit family. In terms of assembly, NDH-1 is composed of 14 different subunits. Subunits NuoB, C, D, E, F, and G constitute the peripheral sector of the complex.

The protein resides in the cell inner membrane. The catalysed reaction is a quinone + NADH + 5 H(+)(in) = a quinol + NAD(+) + 4 H(+)(out). Its function is as follows. NDH-1 shuttles electrons from NADH, via FMN and iron-sulfur (Fe-S) centers, to quinones in the respiratory chain. The immediate electron acceptor for the enzyme in this species is believed to be ubiquinone. Couples the redox reaction to proton translocation (for every two electrons transferred, four hydrogen ions are translocated across the cytoplasmic membrane), and thus conserves the redox energy in a proton gradient. The chain is NADH-quinone oxidoreductase subunit D from Rickettsia felis (strain ATCC VR-1525 / URRWXCal2) (Rickettsia azadi).